Here is a 305-residue protein sequence, read N- to C-terminus: Peroxidase A2 (305 aa).

Gln-1 is modified (pyrrolidone carboxylic acid). Residues Asn-3 and Asn-13 are each glycosylated (N-linked (GlcNAc...) asparagine). 4 disulfides stabilise this stretch: Cys-11-Cys-91, Cys-44-Cys-49, Cys-97-Cys-299, and Cys-176-Cys-208. Residue His-42 is the Proton acceptor of the active site. Residues Asp-43, Val-46, Gly-48, Asp-50, and Ser-52 each contribute to the Ca(2+) site. Pro-139 serves as a coordination point for substrate. Asn-147 carries N-linked (GlcNAc...) asparagine glycosylation. His-169 serves as a coordination point for heme b. Position 170 (Thr-170) interacts with Ca(2+). Asn-185, Asn-197, and Asn-211 each carry an N-linked (GlcNAc...) asparagine glycan. The Ca(2+) site is built by Asp-221, Thr-224, and Asp-229. Asn-267 carries N-linked (GlcNAc...) asparagine glycosylation.

It belongs to the peroxidase family. Classical plant (class III) peroxidase subfamily. The cofactor is Ca(2+). It depends on heme b as a cofactor.

The catalysed reaction is 2 a phenolic donor + H2O2 = 2 a phenolic radical donor + 2 H2O. Functionally, removal of H(2)O(2), oxidation of toxic reductants, biosynthesis and degradation of lignin, suberization, auxin catabolism, response to environmental stresses such as wounding, pathogen attack and oxidative stress. These functions might be dependent on each isozyme/isoform in each plant tissue. This chain is Peroxidase A2 (HRPA2), found in Armoracia rusticana (Horseradish).